A 1642-amino-acid polypeptide reads, in one-letter code: Cholesterol transporter ABCA5 (1642 aa).

Residues 32–52 traverse the membrane as a helical segment; it reads SVQEILFPLFFLFWLILVSMM. N-linked (GlcNAc...) asparagine glycosylation occurs at N86. A run of 5 helical transmembrane segments spans residues 220 to 240, 264 to 284, 297 to 317, 328 to 348, and 355 to 375; these read VILI…AIHI, LSWV…MAVI, IVIF…ALML, GVVE…IVLI, and LVWL…AQVM. N388 is a glycosylation site (N-linked (GlcNAc...) asparagine). Residues 396–416 traverse the membrane as a helical segment; sequence LIITIIMLALDSVFYVLLAVY. The N-linked (GlcNAc...) asparagine glycan is linked to N458. One can recognise an ABC transporter 1 domain in the interval 478–713; it reads IRISGIQKSY…WGIGYRLSMY (236 aa). Position 514–521 (514–521) interacts with ATP; that stretch reads GHSGTGKS. A helical membrane pass occupies residues 864-884; the sequence is AVLLLLLIFFAVQIFMFFLHH. A glycan (N-linked (GlcNAc...) asparagine) is linked at N919. Residues 967–987 traverse the membrane as a helical segment; that stretch reads VFSAVFNSTMVYCLPVMMNII. An N-linked (GlcNAc...) asparagine glycan is attached at N996. Helical transmembrane passes span 1021–1041, 1071–1091, 1102–1122, 1138–1158, 1164–1184, and 1207–1227; these read LYFQ…YFAM, VVDI…LFAF, FLAV…FTYI, SFIY…TFFL, AVFH…GCLI, and LLVA…LLQH. The region spanning 1290-1533 is the ABC transporter 2 domain; it reads IMVCNLHKEY…FGKGYFLEIK (244 aa). An ATP-binding site is contributed by 1333–1340; the sequence is GPNGAGKS.

It belongs to the ABC transporter superfamily. ABCA family. Post-translationally, N-glycosylated. Expressed in cardiomyocytes, oligodendrocytes and astrocytes in brain, alveolar type 2 cells in lung and follicular cells in the thyroid gland (at protein level). Detected in brain, testis, lung, heart, liver, kidney, skeletal muscle and placenta. Strongly expressed in the basal cells of the seminiferous tubules, interstitial cells consisting of Leydig cells, as well as the tunica albuginea. In the epididymis, specifically and very strongly expressed in the connective tissue outlining the cylindrical epithelium in the corpus and cauda regions, including fibrocytes and smooth muscle cells, as well as within the basal and tall columnar cells of the corpus cylindrical epithelium. Highly expressed in the brain with high expression in cortical and hippocampal neurons and moderately in the lung.

It localises to the golgi apparatus membrane. It is found in the lysosome membrane. The protein resides in the late endosome membrane. Its subcellular location is the cell membrane. It carries out the reaction cholesterol(in) + ATP + H2O = cholesterol(out) + ADP + phosphate + H(+). Functionally, cholesterol efflux transporter in macrophages that is responsible for APOAI/high-density lipoproteins (HDL) formation at the plasma membrane under high cholesterol levels and participates in reverse cholesterol transport. May play a role in the processing of autolysosomes. This chain is Cholesterol transporter ABCA5, found in Mus musculus (Mouse).